The primary structure comprises 182 residues: Ribosome-recycling factor (182 aa).

This sequence belongs to the RRF family.

It localises to the cytoplasm. Functionally, responsible for the release of ribosomes from messenger RNA at the termination of protein biosynthesis. May increase the efficiency of translation by recycling ribosomes from one round of translation to another. The sequence is that of Ribosome-recycling factor from Thermosynechococcus vestitus (strain NIES-2133 / IAM M-273 / BP-1).